The sequence spans 904 residues: MSRPLPYHIYFFTGLLTCWILCTSSAHKCTVRHEVADCSHLKLTQIPEDLPTNITVLNLTHNQLRRLPPANFTRYSRLTILDGGFNSISKLEPELCQNLPWLEILNLQHNEISQLSDKTFVFCMNLTELHLMSNSIQKIQNDPFKNLKNLIKLDLSHNGLSSTKLGTQLQLENLQELLLSNNKISSLTPEELDFLGNSSLERLELSSNQIKEFSPGCFHAIGKLSGLSLNNAKLSPSLTEKLCLELSNTSIENLSLSSNQLDTISHTTFSGLKQTNLTTLDLSRSSLRVMDNDSFAWLPHLEYLSLEYNNIEHLSSRSFYGLSNLRHLNLRWSFTRQSISLTSLPKIDDFSFQWLKCLEYLNMEDNNFPSIKRNTFTGLVRLKFLSLSNSFSSLRTLTNETFLSLAGSPLLLLNLTKNKISKIQSGAFSWLGHLEVLDLGLNEIGQELTGQEWRGLDNIVEIYLSYNKYLELTTNSFTSVPSLQRLMLRRVALKNVACSPSPFRPLPNLVILDLSNNNIANVNDELLKGLEKLEILDLQHNNLARLWKHANPGGPVQFLKGLSHLRILNLGSNGFDEIPVEAFKDLRELKSIDLGMNNLNILPQSVFDNQVSLKSLSLQKNLITSVQKTVFGPAFRNLSYLDMRFNPFDCTCESIAWFVNWINSTHTNISELSNHYLCNTPPQYHGFPVMLFDVSPCKDSAPFELLFMINTNILLIFIFIVLLIHFEGWRISFYWNVSVHRVLGFKEIDRAEQFEYAAYIIHAYKDRDWVWKHFSPMEEEDHTLRFCLEERDFEAGVLKLEAIVNSIRRSRKIIFVITQNLLKDPLCKRFKVHRAVQQAIEQNLDSIILIFLEEIPDYKLNHALCLRRGMFKSHCILNWPVQKERVNAFHHKLKVALGSRNSAH.

The signal sequence occupies residues 1–26; it reads MSRPLPYHIYFFTGLLTCWILCTSSA. The region spanning 27 to 52 is the LRRNT domain; it reads HKCTVRHEVADCSHLKLTQIPEDLPT. Residues 27–705 are Lumenal-facing; that stretch reads HKCTVRHEVA…PCKDSAPFEL (679 aa). Cys29 and Cys38 form a disulfide bridge. N-linked (GlcNAc...) asparagine glycosylation is found at Asn53, Asn58, and Asn71. LRR repeat units follow at residues 53 to 74, 77 to 98, 101 to 122, 125 to 146, 149 to 170, and 173 to 196; these read NITV…NFTR, RLTI…LCQN, WLEI…TFVF, NLTE…PFKN, NLIK…TQLQ, and NLQE…DFLG. The cysteines at positions 96 and 123 are disulfide-linked. Asn125 is a glycosylation site (N-linked (GlcNAc...) asparagine). N-linked (GlcNAc...) asparagine glycosylation is present at Asn197. LRR repeat units follow at residues 199–220 and 223–245; these read SLER…CFHA and KLSG…LCLE. N-linked (GlcNAc...) asparagine glycosylation is found at Asn248, Asn253, Asn276, and Asn292. 14 LRR repeats span residues 250-271, 276-297, 300-321, 324-345, 357-378, 381-401, 409-430, 433-455, 466-487, 508-529, 532-553, 564-585, 588-609, and 612-633; these read SIEN…TFSG, NLTT…SFAW, HLEY…SFYG, NLRH…TSLP, CLEY…TFTG, RLKF…TNET, PLLL…AFSW, HLEV…EWRG, YNKY…QRLM, NLVI…LLKG, KLEI…ANPG, HLRI…AFKD, ELKS…VFDN, and SLKS…VFGP. 2 N-linked (GlcNAc...) asparagine glycosylation sites follow: Asn399 and Asn414. 3 N-linked (GlcNAc...) asparagine glycosylation sites follow: Asn637, Asn663, and Asn668. The region spanning 646 to 699 is the LRRCT domain; the sequence is NPFDCTCESIAWFVNWINSTHTNISELSNHYLCNTPPQYHGFPVMLFDVSPCKD. Cystine bridges form between Cys650–Cys678 and Cys652–Cys697. Residues 706-726 traverse the membrane as a helical segment; it reads LFMINTNILLIFIFIVLLIHF. At 727–904 the chain is on the cytoplasmic side; it reads EGWRISFYWN…VALGSRNSAH (178 aa). Residues 754–897 enclose the TIR domain; it reads FEYAAYIIHA…AFHHKLKVAL (144 aa). Residue Tyr759 is modified to Phosphotyrosine. Glycyl lysine isopeptide (Lys-Gly) (interchain with G-Cter in ubiquitin) cross-links involve residues Lys812 and Lys831. Tyr858 carries the phosphotyrosine modification.

The protein belongs to the Toll-like receptor family. As to quaternary structure, monomer and homodimer; dimerization is triggered by ligand-binding and is required for TLR3 signaling. Interacts (via transmembrane domain) with UNC93B1. Interacts with TICAM1 (via the TIR domain) in response to poly(I:C) and this interaction is enhanced the presence of WDFY1. Interacts with SRC; upon binding of double-stranded RNA. The tyrosine-phosphorylated form (via TIR domain) interacts with WDFY1 (via WD repeat 2) in response to poly(I:C). Ubiquitinated by TRIM3; leading to recognition and sorting of polyubiquitinated TLR3 by the ESCRT complexes. Ubiquitinated by ZNRF1 via 'Lys-63'-linked ubiquitin chains; leading to TLR3 lysosomal trafficking and degradation.

It localises to the endoplasmic reticulum membrane. The protein resides in the endosome membrane. The protein localises to the early endosome. Functionally, key component of innate and adaptive immunity. TLRs (Toll-like receptors) control host immune response against pathogens through recognition of molecular patterns specific to microorganisms. TLR3 is a nucleotide-sensing TLR which is activated by double-stranded RNA, a sign of viral infection. Acts via the adapter TRIF/TICAM1, leading to NF-kappa-B activation, cytokine secretion and the inflammatory response. This chain is Toll-like receptor 3 (TLR3), found in Boselaphus tragocamelus (Nilgai).